The following is a 173-amino-acid chain: MATRNNGKSKAAGSKSGGGHGVGPWLGLGVIWILLDQLTKIAILKTFAYGESRPITGFFNLVLAYNRGAAFSFLAAAGGWQRWFFTGLGVAAALFIVWLLKRHSGQKLFCFALALILGGALGNVIDRLVYGHVVDFLDFHLRGYHWPAFNVADCGICIGAVLLIIDELRRVRR.

The next 4 membrane-spanning stretches (helical) occupy residues 24 to 44, 55 to 75, 80 to 100, and 105 to 125; these read PWLG…IAIL, ITGF…SFLA, WQRW…VWLL, and GQKL…GNVI. Active-site residues include Asp-135 and Asp-153. A helical transmembrane segment spans residues 145 to 165; sequence HWPAFNVADCGICIGAVLLII.

This sequence belongs to the peptidase A8 family.

It localises to the cell inner membrane. The enzyme catalyses Release of signal peptides from bacterial membrane prolipoproteins. Hydrolyzes -Xaa-Yaa-Zaa-|-(S,diacylglyceryl)Cys-, in which Xaa is hydrophobic (preferably Leu), and Yaa (Ala or Ser) and Zaa (Gly or Ala) have small, neutral side chains.. It participates in protein modification; lipoprotein biosynthesis (signal peptide cleavage). In terms of biological role, this protein specifically catalyzes the removal of signal peptides from prolipoproteins. This Ralstonia nicotianae (strain ATCC BAA-1114 / GMI1000) (Ralstonia solanacearum) protein is Lipoprotein signal peptidase.